The following is a 362-amino-acid chain: MEHNGSASNAGKIHQNRLSSVTEDEDQDAALTIVTVLDRVASVVDSVQASQKRIEERHREMGNAIKSVQIDLLKLSQSHSNTGYVVNKLFEKTRKVSAHIKDVKARVEKQQVRVTKVETKQEEIMKKNKFRVVIFQEDIPCPASLSVVKDRSLPENQEEAEEVFDPPIELSSDEEYYVEESRSARLRKSGKEHIDHIKKAFSRENMQKTRQTLDKKVSGIRTRIVTPERRERLRQSGERLRQSGERLRQSGERFKKSISSAAPSKEAFKIRSLRKAKDPKAEGQEVDRGMGVDIISGSLALGPIHEFHSDEFSETEKEVTKGGYSPQEGGDPPTPEPLKVTFKPQVRVEDDESLLLELKQSS.

Residues 1-24 form a disordered region; it reads MEHNGSASNAGKIHQNRLSSVTED. A coiled-coil region spans residues 100 to 120; that stretch reads IKDVKARVEKQQVRVTKVETK. Phosphoserine is present on residues Ser-152, Ser-171, and Ser-172. Basic and acidic residues-rich tracts occupy residues 230–255, 275–289, and 305–320; these read RERLRQSGERLRQSGERLRQSGERFK, KAKDPKAEGQEVDRG, and HEFHSDEFSETEKEVT. Disordered regions lie at residues 230–289 and 305–346; these read RERL…VDRG and HEFH…KPQV. Tyr-324 bears the Phosphotyrosine mark. Thr-334 is subject to Phosphothreonine. A Phosphoserine modification is found at Ser-353.

The protein belongs to the CAVIN family. In terms of assembly, component of the CAVIN complex composed of CAVIN1, CAVIN2, CAVIN3 and CAVIN4. Interacts with CAVIN1. Interacts with CAVIN2; this augments the transactivation of NPPA. Interacts with CAV3, ADRA1A, ADRA1B, MAPK1 and MAPK3. In terms of tissue distribution, abundantly expressed in cardiac and skeletal muscle (at protein level). Weaker expression in aorta and lung. In heart, expressed in cardiomyocytes and vascular smooth muscle cells but not in other surrounding cells including vascular endothelial cells.

The protein localises to the cytoplasm. The protein resides in the myofibril. It localises to the sarcomere. It is found in the cytosol. Its subcellular location is the membrane. The protein localises to the caveola. The protein resides in the cell membrane. It localises to the sarcolemma. In terms of biological role, modulates the morphology of formed caveolae in cardiomyocytes, but is not required for caveolar formation. Facilitates the recruitment of MAPK1/3 to caveolae within cardiomyocytes and regulates alpha-1 adrenergic receptor-induced hypertrophic responses in cardiomyocytes through MAPK1/3 activation. Contributes to proper membrane localization and stabilization of caveolin-3 (CAV3) in cardiomyocytes. Induces RHOA activation and activates NPPA transcription and myofibrillar organization through the Rho/ROCK signaling pathway. The protein is Caveolae-associated protein 4 (Cavin4) of Mus musculus (Mouse).